Reading from the N-terminus, the 208-residue chain is Large ribosomal subunit protein uL3 (208 aa).

Q149 bears the N5-methylglutamine mark.

The protein belongs to the universal ribosomal protein uL3 family. As to quaternary structure, part of the 50S ribosomal subunit. Forms a cluster with proteins L14 and L19. In terms of processing, methylated by PrmB.

Functionally, one of the primary rRNA binding proteins, it binds directly near the 3'-end of the 23S rRNA, where it nucleates assembly of the 50S subunit. This is Large ribosomal subunit protein uL3 from Actinobacillus succinogenes (strain ATCC 55618 / DSM 22257 / CCUG 43843 / 130Z).